Reading from the N-terminus, the 333-residue chain is Gap junction alpha-4 protein (333 aa).

At 1-20 (MGDWGFLEKLLDQVQEHSTV) the chain is on the cytoplasmic side. Residues 21–40 (VGKIWLTVLFIFRILILGLA) traverse the membrane as a helical segment. Over 41–76 (GESVWGDEQSDFECNTAQPGCTNVCYDQAFPISHIR) the chain is Extracellular. Residues 77–99 (YWVLQFLFVSTPTLIYLGHVIYL) form a helical membrane-spanning segment. Residues 100–148 (SRREERLRQKEGELRALPSKDPHVERALAAIEHQMAKISVAEDGRLRIR) are Cytoplasmic-facing. Residues 149 to 171 (GALMGTYVISVLCKSVLEAGFLY) traverse the membrane as a helical segment. At 172–208 (GQWRLYGWTMEPVFVCQRAPCPHVVDCYVSRPTEKTI) the chain is on the extracellular side. The helical transmembrane segment at 209–231 (FIIFMLVVGVISLVLNLLELVHL) threads the bilayer. At 232–333 (LCRCVSREIK…NSSASKKQYV (102 aa)) the chain is on the cytoplasmic side. The interval 292-333 (ANLTTEERLTSTRPPPFVNAAPQGGQKSSSRPNSSASKKQYV) is disordered. The span at 318–333 (KSSSRPNSSASKKQYV) shows a compositional bias: low complexity.

This sequence belongs to the connexin family. Alpha-type (group II) subfamily. In terms of assembly, a connexon is composed of a hexamer of connexins. In terms of tissue distribution, highly expressed in lung.

Its subcellular location is the cell membrane. It is found in the cell junction. It localises to the gap junction. Functionally, one gap junction consists of a cluster of closely packed pairs of transmembrane channels, the connexons, through which materials of low MW diffuse from one cell to a neighboring cell. This is Gap junction alpha-4 protein (Gja4) from Rattus norvegicus (Rat).